Here is a 112-residue protein sequence, read N- to C-terminus: Putative pterin-4-alpha-carbinolamine dehydratase (112 aa).

This sequence belongs to the pterin-4-alpha-carbinolamine dehydratase family.

It carries out the reaction (4aS,6R)-4a-hydroxy-L-erythro-5,6,7,8-tetrahydrobiopterin = (6R)-L-erythro-6,7-dihydrobiopterin + H2O. This chain is Putative pterin-4-alpha-carbinolamine dehydratase, found in Shewanella baltica (strain OS223).